Here is a 208-residue protein sequence, read N- to C-terminus: MASKCPKCDKTVCFAEKVSSLGKDWHKFCLKCERCSKTLTPGGHAEHDGKPFCHKPCYATLFGPKGVNIGGAGSYIYEKPLAEGPQVTGPIEVPAARAEERKASGPPKGPSRASSVTTFTGEPNTCPRCSKKVYFAEKVTSLGKDWHRPCLHCERCGKTLTPGGHAEHDGQPYCHKPCYGILFGPKGVNTGAVGSYIYDRDPEGKVQP.

An LIM zinc-binding 1 domain is found at 5-57; that stretch reads CPKCDKTVCFAEKVSSLGKDWHKFCLKCERCSKTLTPGGHAEHDGKPFCHKPC. Residue Lys23 is modified to N6-acetyllysine. The segment at 98-119 is disordered; sequence AEERKASGPPKGPSRASSVTTF. Phosphoserine is present on Ser104. Residues 126 to 178 enclose the LIM zinc-binding 2 domain; sequence CPRCSKKVYFAEKVTSLGKDWHRPCLHCERCGKTLTPGGHAEHDGQPYCHKPC. 2 positions are modified to N6-acetyllysine: Lys138 and Lys144.

As to quaternary structure, interacts with TGFB1I1.

The polypeptide is Cysteine-rich protein 2 (CRIP2) (Pongo abelii (Sumatran orangutan)).